The sequence spans 341 residues: MKPIILQGHERSLNQIVFNSEGDLLFSASKDSVVNAWYTSNGERLGTYGGIKGGDGHNGSVWTVAVDSQTRFLLTGGADNAMKLWEVKTGECLYTWEFLTAVKRVAWNEDDDMFLSITEQRSGQPSVIRIFSINREDPRSQSTTPITEMRLSGSRATVAIWAPLSDYIITGHESGKIAKYDVKTGEEVQAVEDEHSALISDIQLSPDGTYFITASKDKTARLWDIETLEVMKVYTTETPVNSAVITPDRPYIILGGGQDAMNVTTTSQRAGKFESRFFHKLFEEEVGRVKGHFGPINTLSVHPQGRAYASGAEDGFVRVHWFEESYFRSRPFGDLEPEPEV.

6 WD repeats span residues 8–47 (GHERSLNQIVFNSEGDLLFSASKDSVVNAWYTSNGERLGT), 56–95 (GHNGSVWTVAVDSQTRFLLTGGADNAMKLWEVKTGECLYT), 151–190 (LSGSRATVAIWAPLSDYIITGHESGKIAKYDVKTGEEVQA), 194–233 (EHSALISDIQLSPDGTYFITASKDKTARLWDIETLEVMKV), 235–274 (TTETPVNSAVITPDRPYIILGGGQDAMNVTTTSQRAGKFE), and 291–331 (GHFG…RSRP).

It belongs to the eIF-3 subunit I family. In terms of assembly, component of the eukaryotic translation initiation factor 3 (eIF-3) complex.

It localises to the cytoplasm. Component of the eukaryotic translation initiation factor 3 (eIF-3) complex, which is involved in protein synthesis of a specialized repertoire of mRNAs and, together with other initiation factors, stimulates binding of mRNA and methionyl-tRNAi to the 40S ribosome. The eIF-3 complex specifically targets and initiates translation of a subset of mRNAs involved in cell proliferation. The polypeptide is Eukaryotic translation initiation factor 3 subunit I (Cryptococcus neoformans var. neoformans serotype D (strain B-3501A) (Filobasidiella neoformans)).